Consider the following 288-residue polypeptide: MLCVRNSGECFRDHMRHMMRSLQDLKQIREPDDQSKCSYVTRARQKRIKQREQLSRLRISDVSDTSTYDSACCLASPLEEEEDQENHAERLAQGSPSSIKSLDFDSGYSEASWQDEGVVLRRTRNVRVSSSACVRTNRIRPKSTSDACLERWTSFEASDPTDWTTSLLTRGRNRQPLVLGDNSFADLIKNWMDLPECPDSAELKPSRKTAFLVNMRRKIAGISKGLEERRSAEAKRMSCPVGFQPPKPFFHQSHTSLHPMGTDFYQFSSVMKSGSRQPIICNDVIGYI.

Residues 159–196 form an inka box region; sequence DPTDWTTSLLTRGRNRQPLVLGDNSFADLIKNWMDLPE.

This sequence belongs to the INKA family.

Its subcellular location is the nucleus. Functionally, inhibitor of the serine/threonine-protein kinase pak4/pak5. Acts by binding pak4/pak5 in a substrate-like manner, inhibiting the protein kinase activity. The sequence is that of PAK4-inhibitor inka2 from Danio rerio (Zebrafish).